Reading from the N-terminus, the 151-residue chain is Metallothiol transferase FosB (151 aa).

A VOC domain is found at 4-119 (SINHVTYSVS…DGHKFELHTG (116 aa)). Positions 7, 66, and 115 each coordinate Mg(2+). The Proton donor/acceptor role is filled by E115.

This sequence belongs to the fosfomycin resistance protein family. FosB subfamily. As to quaternary structure, homodimer. Mg(2+) serves as cofactor.

The protein localises to the cytoplasm. Its function is as follows. Metallothiol transferase which confers resistance to fosfomycin by catalyzing the addition of a thiol cofactor to fosfomycin. L-cysteine is probably the physiological thiol donor. The protein is Metallothiol transferase FosB of Staphylococcus saprophyticus subsp. saprophyticus (strain ATCC 15305 / DSM 20229 / NCIMB 8711 / NCTC 7292 / S-41).